Consider the following 382-residue polypeptide: Putative glutamate--cysteine ligase 2-1 (382 aa).

It belongs to the glutamate--cysteine ligase type 2 family. YbdK subfamily.

It catalyses the reaction L-cysteine + L-glutamate + ATP = gamma-L-glutamyl-L-cysteine + ADP + phosphate + H(+). ATP-dependent carboxylate-amine ligase which exhibits weak glutamate--cysteine ligase activity. This chain is Putative glutamate--cysteine ligase 2-1, found in Nocardioides sp. (strain ATCC BAA-499 / JS614).